Here is a 504-residue protein sequence, read N- to C-terminus: Cytochrome P450 3A16 (504 aa).

Residue cysteine 443 participates in heme binding.

This sequence belongs to the cytochrome P450 family. It depends on heme as a cofactor.

The protein resides in the endoplasmic reticulum membrane. The protein localises to the microsome membrane. It carries out the reaction an organic molecule + reduced [NADPH--hemoprotein reductase] + O2 = an alcohol + oxidized [NADPH--hemoprotein reductase] + H2O + H(+). Its function is as follows. Cytochromes P450 are a group of heme-thiolate monooxygenases. In liver microsomes, this enzyme is involved in an NADPH-dependent electron transport pathway. It oxidizes a variety of structurally unrelated compounds, including steroids, fatty acids, and xenobiotics. This Mus musculus (Mouse) protein is Cytochrome P450 3A16 (Cyp3a16).